The primary structure comprises 407 residues: Transmembrane protein 184B (407 aa).

Residues 1-28 (MTVRGAALAPDPASPTTTTASPSVSATP) show a composition bias toward low complexity. The interval 1–31 (MTVRGAALAPDPASPTTTTASPSVSATPEGS) is disordered. The next 7 helical transmembrane spans lie at 40-60 (FLMT…ALLI), 84-104 (ILFI…FFTN), 121-141 (FVIY…SAIM), 178-198 (LQFC…QAFG), 214-234 (VTII…LFYF), 249-269 (FFMV…LAIL), and 290-310 (VAAG…ALAL). The tract at residues 369-395 (TLEPGPTWRGGTHSLSRSHSLSGARDN) is disordered. A phosphoserine mark is found at S388, S402, and S403.

It belongs to the TMEM184 family.

Its subcellular location is the membrane. May activate the MAP kinase signaling pathway. The protein is Transmembrane protein 184B (Tmem184b) of Mus musculus (Mouse).